Consider the following 210-residue polypeptide: Transmembrane protein 61 (210 aa).

Transmembrane regions (helical) follow at residues 18–38 (YCMT…FAWW) and 69–89 (VSFV…LWSV). A disordered region spans residues 140 to 172 (VAEGPPTPPAYPTEEALEPSGSRDALLSTQPAW).

It localises to the membrane. In Homo sapiens (Human), this protein is Transmembrane protein 61 (TMEM61).